The chain runs to 351 residues: Minor outer capsid protein P9 (351 aa).

2 disordered regions span residues 245-281 (GGVP…DQPE) and 288-307 (KKVD…GNVS). The span at 288–297 (KKVDASKDAP) shows a compositional bias: basic and acidic residues.

It belongs to the phytoreovirus minor outer capsid protein P9 family.

Its subcellular location is the virion. It is found in the host cytoplasm. In terms of biological role, minor outer capsid protein. This Rice dwarf virus (RDV) protein is Minor outer capsid protein P9.